The chain runs to 309 residues: Homoserine kinase (309 aa).

91 to 101 (PIGSGLGSSAC) contacts ATP.

It belongs to the GHMP kinase family. Homoserine kinase subfamily.

Its subcellular location is the cytoplasm. The enzyme catalyses L-homoserine + ATP = O-phospho-L-homoserine + ADP + H(+). The protein operates within amino-acid biosynthesis; L-threonine biosynthesis; L-threonine from L-aspartate: step 4/5. In terms of biological role, catalyzes the ATP-dependent phosphorylation of L-homoserine to L-homoserine phosphate. The polypeptide is Homoserine kinase (thrB) (Serratia marcescens).